A 1392-amino-acid chain; its full sequence is DNA-directed RNA polymerase subunit beta'' (1392 aa).

Positions 224, 295, 302, and 305 each coordinate Zn(2+).

Belongs to the RNA polymerase beta' chain family. RpoC2 subfamily. In plastids the minimal PEP RNA polymerase catalytic core is composed of four subunits: alpha, beta, beta', and beta''. When a (nuclear-encoded) sigma factor is associated with the core the holoenzyme is formed, which can initiate transcription. The cofactor is Zn(2+).

Its subcellular location is the plastid. It is found in the chloroplast. It carries out the reaction RNA(n) + a ribonucleoside 5'-triphosphate = RNA(n+1) + diphosphate. Its function is as follows. DNA-dependent RNA polymerase catalyzes the transcription of DNA into RNA using the four ribonucleoside triphosphates as substrates. This Solanum tuberosum (Potato) protein is DNA-directed RNA polymerase subunit beta''.